The sequence spans 565 residues: MAQRIFTLILLLCSTSVFAGLFDAPGRSQFVPADQAFAFDFQQNQHDLNLTWQIKDGYYLYRKQIRITPEHAKIADVQLPQGVWHEDEFYGKSEIYRDRLTLPVTINQASAGATLTVTYQGCADAGFCYPPETKTVPLSEVVANNAAPQPVSVPQQEQPTAQLPFSALWALLIGIGIAFTPCVLPMYPLISGIVLGGKQRLSTARALLLTFIYVQGMALTYTALGLVVAAAGLQFQAALQHPYVLIGLAIVFTLLAMSMFGLFTLQLPSSLQTRLTLMSNRQQGGSPGGVFVMGAIAGLICSPCTTAPLSAILLYIAQSGNMWLGGGTLYLYALGMGLPLMLITVFGNRLLPKSGPWMEQVKTAFGFVILALPVFLLERVIGDVWGLRLWSALGVAFFGWAFITSLQAKRGWMRIVQIILLAAALVSVRPLQDWAFGATHTAQTQTHLNFTQIKTVDELNQALVEAKGKPVMLDLYADWCVACKEFEKYTFSDPQVQKALADTVLLQANVTANDAQDVALLKHLNVLGLPTILFFDGQGQEHPQARVTGFMDAETFSAHLRDRQP.

The N-terminal stretch at 1–19 (MAQRIFTLILLLCSTSVFA) is a signal peptide. Residues 20-162 (GLFDAPGRSQ…VPQQEQPTAQ (143 aa)) are Periplasmic-facing. 2 cysteine pairs are disulfide-bonded: Cys-122–Cys-128 and Cys-182–Cys-304. A helical transmembrane segment spans residues 163 to 183 (LPFSALWALLIGIGIAFTPCV). Over 184–207 (LPMYPLISGIVLGGKQRLSTARAL) the chain is Cytoplasmic. Residues 208–228 (LLTFIYVQGMALTYTALGLVV) form a helical membrane-spanning segment. The Periplasmic segment spans residues 229–242 (AAAGLQFQAALQHP). A helical transmembrane segment spans residues 243–263 (YVLIGLAIVFTLLAMSMFGLF). The Cytoplasmic portion of the chain corresponds to 264–295 (TLQLPSSLQTRLTLMSNRQQGGSPGGVFVMGA). Residues 296 to 316 (IAGLICSPCTTAPLSAILLYI) form a helical membrane-spanning segment. Residues 317–322 (AQSGNM) lie on the Periplasmic side of the membrane. The chain crosses the membrane as a helical span at residues 323-343 (WLGGGTLYLYALGMGLPLMLI). Topologically, residues 344–356 (TVFGNRLLPKSGP) are cytoplasmic. The helical transmembrane segment at 357–377 (WMEQVKTAFGFVILALPVFLL) threads the bilayer. Residues 378–383 (ERVIGD) are Periplasmic-facing. A helical transmembrane segment spans residues 384–404 (VWGLRLWSALGVAFFGWAFIT). Residues 405–417 (SLQAKRGWMRIVQ) lie on the Cytoplasmic side of the membrane. A helical transmembrane segment spans residues 418–438 (IILLAAALVSVRPLQDWAFGA). A Thioredoxin domain is found at 434-565 (WAFGATHTAQ…FSAHLRDRQP (132 aa)). The Periplasmic portion of the chain corresponds to 439–565 (THTAQTQTHL…FSAHLRDRQP (127 aa)). A disulfide bond links Cys-480 and Cys-483.

Belongs to the thioredoxin family. DsbD subfamily.

The protein resides in the cell inner membrane. It catalyses the reaction [protein]-dithiol + NAD(+) = [protein]-disulfide + NADH + H(+). The enzyme catalyses [protein]-dithiol + NADP(+) = [protein]-disulfide + NADPH + H(+). Functionally, required to facilitate the formation of correct disulfide bonds in some periplasmic proteins and for the assembly of the periplasmic c-type cytochromes. Acts by transferring electrons from cytoplasmic thioredoxin to the periplasm, thereby maintaining the active site of DsbC, DsbE and DsbG in a reduced state. This transfer involves a cascade of disulfide bond formation and reduction steps. In Escherichia coli (strain K12), this protein is Thiol:disulfide interchange protein DsbD (dsbD).